The sequence spans 208 residues: Uracil phosphoribosyltransferase (208 aa).

5-phospho-alpha-D-ribose 1-diphosphate-binding positions include arginine 78, arginine 103, and 130 to 138 (DPMLATGGS). Uracil is bound by residues isoleucine 193 and 198-200 (GDA). A 5-phospho-alpha-D-ribose 1-diphosphate-binding site is contributed by aspartate 199.

The protein belongs to the UPRTase family. Mg(2+) is required as a cofactor.

It carries out the reaction UMP + diphosphate = 5-phospho-alpha-D-ribose 1-diphosphate + uracil. It functions in the pathway pyrimidine metabolism; UMP biosynthesis via salvage pathway; UMP from uracil: step 1/1. Its activity is regulated as follows. Allosterically activated by GTP. Functionally, catalyzes the conversion of uracil and 5-phospho-alpha-D-ribose 1-diphosphate (PRPP) to UMP and diphosphate. The protein is Uracil phosphoribosyltransferase of Desulfovibrio desulfuricans (strain ATCC 27774 / DSM 6949 / MB).